A 308-amino-acid polypeptide reads, in one-letter code: D-alanine--D-alanine ligase (308 aa).

The ATP-grasp domain occupies 105-302 (KAIFKALGLD…FPELCERILD (198 aa)). Residue 133 to 188 (DLPFGVPCVVKPAGEGSSVGVQIVKDAARLADACREAARYKGDVVVERYVKGTEVN) participates in ATP binding. Mg(2+) is bound by residues aspartate 256, glutamate 269, and asparagine 271.

Belongs to the D-alanine--D-alanine ligase family. Mg(2+) is required as a cofactor. Mn(2+) serves as cofactor.

The protein localises to the cytoplasm. It catalyses the reaction 2 D-alanine + ATP = D-alanyl-D-alanine + ADP + phosphate + H(+). It participates in cell wall biogenesis; peptidoglycan biosynthesis. Its function is as follows. Cell wall formation. The chain is D-alanine--D-alanine ligase from Anaeromyxobacter sp. (strain Fw109-5).